Here is a 384-residue protein sequence, read N- to C-terminus: Cell division protein FtsZ (384 aa).

GTP is bound by residues 20-24, 107-109, Glu138, Arg142, and Asn186; these read GGGGN and GTG.

It belongs to the FtsZ family. Homodimer. Polymerizes to form a dynamic ring structure in a strictly GTP-dependent manner. Interacts directly with several other division proteins.

It localises to the cytoplasm. Essential cell division protein that forms a contractile ring structure (Z ring) at the future cell division site. The regulation of the ring assembly controls the timing and the location of cell division. One of the functions of the FtsZ ring is to recruit other cell division proteins to the septum to produce a new cell wall between the dividing cells. Binds GTP and shows GTPase activity. The polypeptide is Cell division protein FtsZ (Buchnera aphidicola subsp. Schizaphis graminum (strain Sg)).